The following is a 456-amino-acid chain: Serine/threonine-protein kinase PBS1 (456 aa).

The segment at 1–57 (MGCFSCFDSSDDEKLNPVDESNHGQKKQSQPTVSNNISGLPSGGEKLSSKTNGGSKR) is disordered. Gly-2 is lipidated: N-myristoyl glycine. Residues Cys-3 and Cys-6 are each lipidated (S-palmitoyl cysteine). The span at 12–23 (DEKLNPVDESNH) shows a compositional bias: basic and acidic residues. At Ser-21 the chain carries Phosphoserine. The segment covering 27–39 (KQSQPTVSNNISG) has biased composition (polar residues). In terms of domain architecture, Protein kinase spans 86-363 (FHPDTFLGEG…ADVVTALSYL (278 aa)). Residues 92 to 100 (LGEGGFGRV) and Lys-115 contribute to the ATP site. At Tyr-160 the chain carries Phosphotyrosine. Asp-213 functions as the Proton acceptor in the catalytic mechanism. Residues Ser-217 and Ser-247 each carry the phosphoserine modification. Phosphothreonine is present on residues Thr-248 and Thr-253. A Phosphotyrosine modification is found at Tyr-261. The Recognition motif required for RPS5-mediated plant resistance to P.syringae signature appears at 292 to 296 (SEMPH). Residues 368-456 (YDPSKDDSRR…QGTSESNSTG (89 aa)) form a disordered region. 2 stretches are compositionally biased toward basic and acidic residues: residues 370–392 (PSKD…RNDD) and 400–429 (FDLE…RAVA). Positions 446-456 (EQGTSESNSTG) are enriched in polar residues.

This sequence belongs to the protein kinase superfamily. Ser/Thr protein kinase family. In infected plant cells, it interacts with the P.syringae virulence protein avrPphB. In uninfected plants, autophosphorylated form interacts with RPS5. Interacts with FLS2. Cleaved by avrPphB in infected plant cells. Its cleavage serves as a signal that triggers the RPS5-mediated defense system. Post-translationally, autophosphorylates. Autophosphorylation may be required to trigger the RPS5-mediated plant defense system. In terms of processing, palmitoylation at Cys-3 and Cys-6 are required for plasma membrane location that is essential for the RPS5-mediated plant defense response.

The protein localises to the cell membrane. It carries out the reaction L-seryl-[protein] + ATP = O-phospho-L-seryl-[protein] + ADP + H(+). The enzyme catalyses L-threonyl-[protein] + ATP = O-phospho-L-threonyl-[protein] + ADP + H(+). In terms of biological role, protein kinase required for plant defense mechanism mediated by the disease resistance (R) protein RPS5. In case of infection by Pseudomonas syringae, AvrPphB triggers RPS5-mediated defense mechanism via the cleavage of PBS1. Both kinase activity and cleavage by avrPphB are independently required to trigger the RPS5-mediated resistance. Contributes to PAMP-triggered immunity (PTI) signaling and defense responses downstream of FLS2. The chain is Serine/threonine-protein kinase PBS1 from Arabidopsis thaliana (Mouse-ear cress).